The sequence spans 565 residues: MELEYESKRPLHIPYAGPILLEFPLLNKGSAFTEEERANFNLHGLLPEAVETIEEQAERAWRQYQEFKHDIEKHVYLRNIQDTNETLFYRLLDGHLSEMMPIIYTPTVGEACEHFSDIYRRARGLFISYPNRAHIDDMLQNATKQNVKVIVVTDGERILGLGDQGIGGMGIPIGKLSLYTACGGISPAYTLPVVLDVGTNNPQRLNDPLYMGWRHPRITDDEYYEFVDEFIQAVKRRWPNVLLQFEDFAQKNATPLLNRYRDEICSFNDDIQGTAAVALGSLIAASRAAGTQLRDQTVAFLGAGSAGCGIAEQIIAQMKSEGLSDEEARARVFMVDRFGLLTDKLPNLLDFQSKLVQKSELLANWDCNSDAISLLEVVRNAKPTILIGVSGQPGLFTEEIIREMHKHCARPIVMPLSNPTSRVEARPEDIIRWTEGAALVATGSPFSPVNYQDKVFPIAQCNNSYIFPGIGLGVLASGAKRITDGMLMAASRALADCSPLANNGEGALLPDLADIQQVSKRIALEVGKAAQLQGAAVVTSSDALQKAIEHNFWQPQYRSYKRTSF.

The Proton donor role is filled by Tyr104. An NAD(+)-binding site is contributed by Arg157. Lys175 serves as the catalytic Proton acceptor. Positions 246, 247, and 270 each coordinate a divalent metal cation. The NAD(+) site is built by Asp270 and Asn418.

This sequence belongs to the malic enzymes family. As to quaternary structure, homotetramer. Mg(2+) is required as a cofactor. The cofactor is Mn(2+).

The catalysed reaction is (S)-malate + NAD(+) = pyruvate + CO2 + NADH. It carries out the reaction oxaloacetate + H(+) = pyruvate + CO2. The polypeptide is NAD-dependent malic enzyme (Pectobacterium carotovorum subsp. carotovorum (strain PC1)).